The primary structure comprises 481 residues: Sphingosine kinase 2 (481 aa).

In terms of domain architecture, DAGKc spans 111–253 (GRPKRLLVFV…VDVATIAQGN (143 aa)). ATP-binding positions include 121–123 (NPF) and threonine 153. Substrate is bound at residue 178–181 (SGDG). Aspartate 180 serves as the catalytic Proton donor/acceptor. ATP is bound by residues glutamate 185 and 210–212 (GTG). Residue aspartate 271 participates in substrate binding. Residues arginine 278, arginine 284, and 441 to 443 (DGE) contribute to the ATP site.

Mg(2+) serves as cofactor. As to expression, highly expressed in flowers and siliques and at lower levels in roots, leaves and stems.

Its subcellular location is the vacuole membrane. It catalyses the reaction a sphingoid base + ATP = a sphingoid 1-phosphate + ADP + H(+). Activated by phosphatidic acid (PA). Binding with PA stimulates the activity by promoting the binding of substrate to the catalytic site. Involved in the production of sphingolipid metabolites. Phosphorylates sphingosine and various l sphingoid long-chain base (LCB) products, such as phytosphingosine (PHS, 4-hydroxysphinganine), 4-hydroxy-8-sphingenine, 4,8-sphingadienine and D-erythro-dihydrosphingosine, but has a very few activity toward D,L-threo- dihydrosphingosine. Is required for abscisic acid (ABA) signaling that mediates stomatal closure, inhibition of seed germination and root elongation. May function upstream of PLDALPHA1 and phosphatidic acid (PA) in an amplification response to ABA that mediates stomatal closure. The chain is Sphingosine kinase 2 (SPHK2) from Arabidopsis thaliana (Mouse-ear cress).